The sequence spans 454 residues: MAAFARMVKGQVRNYSAPLDMAIPASKQKYIPSSGSYPKGFLVSGTHVGVKASNTRFPDLALISSETPCSAAAVFTTNKFQAAPVQVSKKTLQERQGQGIRSVVINSGCANAVTGKGGYEDAVNMGKKVDECEGLSKPSTLVMSTGVIGQRLPISKILDKIPTAYANLASTHEAWLTTARAICTTDTFPKLLSRTFTLPSSPGHTYSLAGMTKGAGMIHPNMATLLGVLCTDAPIAPSALQSLLKYAVSRSFNSISVDGDTSTNDTIAVLANGAAGGAPINSASSDDYAAMQEILTSFAQSLSQLVVRDGEGATKFVTVRVQNSPDYDSARLIASTIARSPLVKTALYGRDANWGRILCAIGYTQGVAPGTVVPERTSVSFKPVDGSAVLKLLVNGEPEQVDEERASAILQEEDLEIVVDLGGGEKGELGGEEAVYWFCDFSHEYVTINGDYRT.

Substrate contacts are provided by Thr-184, Lys-213, Thr-224, Glu-311, Asn-449, and Thr-454. The active-site Nucleophile is Thr-224.

Belongs to the ArgJ family. In terms of assembly, heterodimer of an alpha and a beta chain. Post-translationally, the alpha and beta chains are autoproteolytically processed from a single precursor protein within the mitochondrion.

It localises to the mitochondrion matrix. The enzyme catalyses N(2)-acetyl-L-ornithine + L-glutamate = N-acetyl-L-glutamate + L-ornithine. It catalyses the reaction L-glutamate + acetyl-CoA = N-acetyl-L-glutamate + CoA + H(+). Its pathway is amino-acid biosynthesis; L-arginine biosynthesis; L-ornithine and N-acetyl-L-glutamate from L-glutamate and N(2)-acetyl-L-ornithine (cyclic): step 1/1. The protein operates within amino-acid biosynthesis; L-arginine biosynthesis; N(2)-acetyl-L-ornithine from L-glutamate: step 1/4. Its function is as follows. Catalyzes two activities which are involved in the cyclic version of arginine biosynthesis: the synthesis of acetylglutamate from glutamate and acetyl-CoA, and of ornithine by transacetylation between acetylornithine and glutamate. This chain is Arginine biosynthesis bifunctional protein ArgJ, mitochondrial, found in Aspergillus clavatus (strain ATCC 1007 / CBS 513.65 / DSM 816 / NCTC 3887 / NRRL 1 / QM 1276 / 107).